A 506-amino-acid polypeptide reads, in one-letter code: Histidine ammonia-lyase (506 aa).

The segment at residues 141–143 is a cross-link (5-imidazolinone (Ala-Gly)); the sequence is ASG. Position 142 is a 2,3-didehydroalanine (Ser) (serine 142).

It belongs to the PAL/histidase family. Contains an active site 4-methylidene-imidazol-5-one (MIO), which is formed autocatalytically by cyclization and dehydration of residues Ala-Ser-Gly.

It is found in the cytoplasm. The enzyme catalyses L-histidine = trans-urocanate + NH4(+). It functions in the pathway amino-acid degradation; L-histidine degradation into L-glutamate; N-formimidoyl-L-glutamate from L-histidine: step 1/3. This is Histidine ammonia-lyase from Burkholderia multivorans (strain ATCC 17616 / 249).